A 338-amino-acid chain; its full sequence is Tetraacyldisaccharide 4'-kinase (338 aa).

51–58 (HVGGAGKT) contacts ATP.

Belongs to the LpxK family.

It catalyses the reaction a lipid A disaccharide + ATP = a lipid IVA + ADP + H(+). It functions in the pathway glycolipid biosynthesis; lipid IV(A) biosynthesis; lipid IV(A) from (3R)-3-hydroxytetradecanoyl-[acyl-carrier-protein] and UDP-N-acetyl-alpha-D-glucosamine: step 6/6. Functionally, transfers the gamma-phosphate of ATP to the 4'-position of a tetraacyldisaccharide 1-phosphate intermediate (termed DS-1-P) to form tetraacyldisaccharide 1,4'-bis-phosphate (lipid IVA). The sequence is that of Tetraacyldisaccharide 4'-kinase from Bradyrhizobium diazoefficiens (strain JCM 10833 / BCRC 13528 / IAM 13628 / NBRC 14792 / USDA 110).